The sequence spans 357 residues: Protein MGF 360-14L (357 aa).

Belongs to the asfivirus MGF 360 family. In terms of assembly, interacts with host IRF3 and TRIM21; these interactions mediates degradation of IRF3 through TRIM21 and ubiquitin-meditated proteolysis.

The protein resides in the host cytoplasm. Functionally, plays a role in virus cell tropism, and may be required for efficient virus replication in macrophages. Also inhibits the host cGAS/STING-mediated type I interferon production by inducing host IRF3 degradation through the proteasome pathway. This is Protein MGF 360-14L from Ornithodoros (relapsing fever ticks).